Reading from the N-terminus, the 442-residue chain is 4-alpha-glucanotransferase (442 aa).

Asp13, Asn15, Asp17, Val19, and Asp21 together coordinate Ca(2+). The Nucleophile role is filled by Asp186. Glu216 serves as the catalytic Proton donor.

It belongs to the glycosyl hydrolase 13 family. In terms of assembly, monomer. Ca(2+) is required as a cofactor.

Its subcellular location is the cytoplasm. The enzyme catalyses Transfers a segment of a (1-&gt;4)-alpha-D-glucan to a new position in an acceptor, which may be glucose or a (1-&gt;4)-alpha-D-glucan.. Functionally, hydrolyzes the 1,4-alpha-glycoside bonds in oligomeric and polymeric 1,4-alpha-glucans and transfers oligosaccharides (maltotriose being the shortest one) to acceptor maltodextrins. In Thermotoga neapolitana, this protein is 4-alpha-glucanotransferase (mgtA).